Reading from the N-terminus, the 197-residue chain is MSNYTATVYRETLETRVEVDLNLSGEGHFTAETGLPFLEHMLAQVARHGLLDLTVKASGDLHIDAHHTVEDIGITLGQALQQALGDKTGLQRYGYAYVPLDEALSRVVLDLSGRPSLHYRVNYPRARIGDFDVDLFQEFFQGLVNHAAMTLHIDNLHGRNAHHIAETIFKAFGRALRVAVEYDPRRKGQLASTKGML.

Belongs to the imidazoleglycerol-phosphate dehydratase family.

The protein resides in the cytoplasm. It catalyses the reaction D-erythro-1-(imidazol-4-yl)glycerol 3-phosphate = 3-(imidazol-4-yl)-2-oxopropyl phosphate + H2O. It functions in the pathway amino-acid biosynthesis; L-histidine biosynthesis; L-histidine from 5-phospho-alpha-D-ribose 1-diphosphate: step 6/9. This is Imidazoleglycerol-phosphate dehydratase from Nitrosococcus oceani (strain ATCC 19707 / BCRC 17464 / JCM 30415 / NCIMB 11848 / C-107).